Consider the following 447-residue polypeptide: Gamma-glutamyl phosphate reductase (447 aa).

The protein belongs to the gamma-glutamyl phosphate reductase family.

Its subcellular location is the cytoplasm. The catalysed reaction is L-glutamate 5-semialdehyde + phosphate + NADP(+) = L-glutamyl 5-phosphate + NADPH + H(+). It participates in amino-acid biosynthesis; L-proline biosynthesis; L-glutamate 5-semialdehyde from L-glutamate: step 2/2. Catalyzes the NADPH-dependent reduction of L-glutamate 5-phosphate into L-glutamate 5-semialdehyde and phosphate. The product spontaneously undergoes cyclization to form 1-pyrroline-5-carboxylate. The polypeptide is Gamma-glutamyl phosphate reductase (Methanosarcina acetivorans (strain ATCC 35395 / DSM 2834 / JCM 12185 / C2A)).